Consider the following 463-residue polypeptide: Putative sodium-coupled neutral amino acid transporter 11 (463 aa).

A disordered region spans residues 1-27 (MGYPGQRPVIPPQSHRDDRETLVSEHK). Positions 14–25 (SHRDDRETLVSE) are enriched in basic and acidic residues. The next 11 membrane-spanning stretches (helical) occupy residues 38–58 (AVFN…PYSM), 65–85 (LGIL…ILLI), 105–125 (GFPG…IAMI), 150–170 (LLIG…LPLS), 178–198 (LGKI…IVVA), 225–245 (VGVM…YGSL), 256–276 (IIHV…TCGY), 298–320 (VTFG…CFVT), 336–356 (VCHI…SLLI), 358–378 (CLGI…IFII), and 397–417 (IMSC…FVMA). N-linked (GlcNAc...) asparagine glycans are attached at residues Asn-437, Asn-442, and Asn-458.

It belongs to the amino acid/polyamine transporter 2 family.

It is found in the membrane. Functionally, putative sodium-dependent amino acid/proton antiporter. This chain is Putative sodium-coupled neutral amino acid transporter 11 (SLC38A11), found in Bos taurus (Bovine).